The chain runs to 983 residues: Protein translocase subunit SecA (983 aa).

Residues Gln83, 101–105 (GEGKT), and Asp489 contribute to the ATP site. Residues 948–983 (ISSEEEDNNEKTNINNNEDLERTKGEAQQTAKNPNE) are disordered. Residues 973–983 (EAQQTAKNPNE) show a composition bias toward polar residues.

It belongs to the SecA family. As to quaternary structure, monomer and homodimer. Part of the essential Sec protein translocation apparatus which comprises SecA, SecYEG and auxiliary proteins SecDF. Other proteins may also be involved.

It is found in the cell membrane. The protein resides in the cytoplasm. The catalysed reaction is ATP + H2O + cellular proteinSide 1 = ADP + phosphate + cellular proteinSide 2.. Functionally, part of the Sec protein translocase complex. Interacts with the SecYEG preprotein conducting channel. Has a central role in coupling the hydrolysis of ATP to the transfer of proteins into and across the cell membrane, serving as an ATP-driven molecular motor driving the stepwise translocation of polypeptide chains across the membrane. The sequence is that of Protein translocase subunit SecA from Mesomycoplasma hyopneumoniae (strain J / ATCC 25934 / NCTC 10110) (Mycoplasma hyopneumoniae).